We begin with the raw amino-acid sequence, 507 residues long: Histidine ammonia-lyase (507 aa).

Residues A141–G143 constitute a cross-link (5-imidazolinone (Ala-Gly)). A 2,3-didehydroalanine (Ser) modification is found at S142.

This sequence belongs to the PAL/histidase family. Contains an active site 4-methylidene-imidazol-5-one (MIO), which is formed autocatalytically by cyclization and dehydration of residues Ala-Ser-Gly.

It localises to the cytoplasm. The catalysed reaction is L-histidine = trans-urocanate + NH4(+). The protein operates within amino-acid degradation; L-histidine degradation into L-glutamate; N-formimidoyl-L-glutamate from L-histidine: step 1/3. The sequence is that of Histidine ammonia-lyase from Burkholderia orbicola (strain MC0-3).